The chain runs to 41 residues: Probable cinnamyl alcohol dehydrogenase 2 (41 aa).

It belongs to the zinc-containing alcohol dehydrogenase family. Requires Zn(2+) as cofactor.

The catalysed reaction is (E)-cinnamyl alcohol + NADP(+) = (E)-cinnamaldehyde + NADPH + H(+). It carries out the reaction (E)-coniferol + NADP(+) = (E)-coniferaldehyde + NADPH + H(+). The enzyme catalyses (E)-sinapyl alcohol + NADP(+) = (E)-sinapaldehyde + NADPH + H(+). It catalyses the reaction (E)-4-coumaroyl alcohol + NADP(+) = (E)-4-coumaraldehyde + NADPH + H(+). The catalysed reaction is (E)-caffeyl alcohol + NADP(+) = (E)-caffeyl aldehyde + NADPH + H(+). It participates in aromatic compound metabolism; phenylpropanoid biosynthesis. In terms of biological role, involved in lignin biosynthesis. Catalyzes the final step specific for the production of lignin monomers, like coniferyl alcohol, sinapyl alcohol and 4-coumaryl alcohol. This is Probable cinnamyl alcohol dehydrogenase 2 from Pseudotsuga menziesii (Douglas-fir).